Reading from the N-terminus, the 310-residue chain is RING-H2 finger protein ATL60 (310 aa).

A helical transmembrane segment spans residues 24–44 (VLLFSIVSIFTGILFLLLLHL). The RING-type; atypical zinc-finger motif lies at 120–162 (CAVCLSDLVDGDKARVLPRCNHGFHVDCIDMWFQSHSTCPLCR). Disordered regions lie at residues 170 to 201 (DTTHGGSEGLPQNQNFESGHSTNQHNPSQDQS) and 240 to 260 (GNFAASYNDHQQESSSTRSQE). Positions 179–201 (LPQNQNFESGHSTNQHNPSQDQS) are enriched in polar residues.

The protein belongs to the RING-type zinc finger family. ATL subfamily.

It localises to the membrane. The catalysed reaction is S-ubiquitinyl-[E2 ubiquitin-conjugating enzyme]-L-cysteine + [acceptor protein]-L-lysine = [E2 ubiquitin-conjugating enzyme]-L-cysteine + N(6)-ubiquitinyl-[acceptor protein]-L-lysine.. It participates in protein modification; protein ubiquitination. The chain is RING-H2 finger protein ATL60 (ATL60) from Arabidopsis thaliana (Mouse-ear cress).